A 1020-amino-acid polypeptide reads, in one-letter code: P3N-PIPO polyprotein (1020 aa).

A Peptidase S30 domain is found at 165-308 (RMSEASLQLF…KKQSNEIIHY (144 aa)). Catalysis depends on for P1 proteinase activity residues His216, Asp225, and Ser259. Residues 360 to 363 (KITC) carry the Involved in interaction with stylet and aphid transmission motif. The Involved in virions binding and aphid transmission motif lies at 618–620 (PTK). One can recognise a Peptidase C6 domain in the interval 644-766 (MFIAKAGYCY…DSNMKTYLVG (123 aa)). Residues Cys652 and His725 each act as for helper component proteinase activity in the active site.

The protein belongs to the potyviridae P3N-PIPO polyprotein family. As to quaternary structure, interacts (via PIPO domain) with host PCaP1 protein; this interaction may help to anchor the movement complex to the plasma membrane from which the complex could move to the plasmodesmata. Post-translationally, potyviral RNA is expressed as two polyproteins which undergo post-translational proteolytic processing. Genome polyprotein is processed by NIa-pro, P1 and HC-pro proteinases resulting in the production of at least ten individual proteins. P3N-PIPO is cleaved by P1 and HC-pro proteinases resulting in the production of three individual proteins. The P1 proteinase and the HC-pro cleave only their respective C-termini autocatalytically.

It localises to the host cell junction. The protein resides in the host plasmodesma. The catalysed reaction is Hydrolyzes a Gly-|-Gly bond at its own C-terminus, commonly in the sequence -Tyr-Xaa-Val-Gly-|-Gly, in the processing of the potyviral polyprotein.. Functionally, required for aphid transmission and also has proteolytic activity. Only cleaves a Gly-Gly dipeptide at its own C-terminus. Interacts with virions and aphid stylets. Acts as a suppressor of RNA-mediated gene silencing, also known as post-transcriptional gene silencing (PTGS), a mechanism of plant viral defense that limits the accumulation of viral RNAs. May have RNA-binding activity. In terms of biological role, allows efficient cell to cell propagation, by bypassing the host cell wall barrier. Transports viral genome to neighboring plant cells directly through plasmosdesmata, without any budding. This is P3N-PIPO polyprotein from Plum pox potyvirus (isolate NAT) (PPV).